The sequence spans 134 residues: STAG3-like protein 3 (134 aa).

One can recognise an SCD domain in the interval 10 to 95 (PKVTCRDVLP…GCFKDWMVSM (86 aa)).

The protein belongs to the SCC3 family.

The protein localises to the nucleus. This is STAG3-like protein 3 (STAG3L3) from Homo sapiens (Human).